A 392-amino-acid polypeptide reads, in one-letter code: Cell division protein DivIB (392 aa).

Residues 1-88 form a disordered region; it reads MSEKDNNLTP…TQSSEAPIEN (88 aa). Topologically, residues 1-131 are cytoplasmic; sequence MSEKDNNLTP…KGSAPLLKKM (131 aa). A compositionally biased stretch (basic and acidic residues) spans 14–32; it reads KHLEYQKRKAEEAKKEKKA. Residues 58–76 are compositionally biased toward acidic residues; the sequence is TRDEAESAELLEEGFETNN. A helical membrane pass occupies residues 132-152; sequence WPALAVVVLVFVGSLYLISPL. In terms of domain architecture, POTRA spans 153 to 224; it reads SKISTFSVSG…NRFEAIVKEH (72 aa). Over 153–392 the chain is Extracellular; it reads SKISTFSVSG…TAQSTTTSSN (240 aa). Positions 368 to 392 are disordered; sequence ISAQNAKKTDASSENTAQSTTTSSN.

The protein belongs to the FtsQ/DivIB family. DivIB subfamily.

The protein resides in the cell membrane. In terms of biological role, cell division protein that may be involved in stabilizing or promoting the assembly of the division complex. The sequence is that of Cell division protein DivIB from Lactococcus lactis subsp. lactis (strain KF147).